Consider the following 131-residue polypeptide: Antileukoproteinase (131 aa).

The N-terminal stretch at 1-25 (MKSCGLLPFTVLLALGILAPWTVEG) is a signal peptide. WAP domains follow at residues 29-77 (DAIK…VNPV) and 83-131 (VWRK…LPPM). Cystine bridges form between C36/C65, C44/C69, C52/C64, C58/C73, C90/C119, C97/C123, C106/C118, and C112/C127. The tract at residues 85–131 (RKPGRCVKTQARCMMLNPPNVCQRDGQCDGKYKCCEGICGKVCLPPM) is elastase inhibitory domain.

Interacts with GRN; interaction protects progranulin from proteolysis. As to expression, detected in bronchial epithelial cells. Detected in bronchoalveolar fluid after infection with M.tuberculosis (at protein level). Highest expression in lung, spleen, intestine and epididymis with lower levels in liver and seminal vesicle. No expression in brain, heart, kidney and muscle.

The protein localises to the secreted. Its function is as follows. Acid-stable proteinase inhibitor with strong affinities for trypsin, chymotrypsin, elastase, and cathepsin G. Modulates the innate immune response after bacterial infection. Contributes to regulate the inflammatory and immune responses to the intracellular parasite L.major. Down-regulates responses to bacterial lipopolysaccharide (LPS). Plays a role in regulating the activation of NF-kappa-B and inflammatory responses. Has antimicrobial activity against mycobacteria, but not against salmonella. Contributes to normal resistance against infection by M.tuberculosis. Required for normal resistance to L.major. Required for normal wound healing, probably by preventing tissue damage by limiting protease activity. Together with ELANE, required for normal differentiation and proliferation of bone marrow myeloid cells. This chain is Antileukoproteinase (Slpi), found in Mus musculus (Mouse).